Reading from the N-terminus, the 191-residue chain is Phosphopantetheine adenylyltransferase (191 aa).

Ser8 is a substrate binding site. Residues Ser8–Phe9 and His16 contribute to the ATP site. Substrate-binding residues include Lys40, Thr72, and Arg86. ATP is bound by residues Gly87 to Arg89, Glu97, and Tyr122 to Ser128.

The protein belongs to the bacterial CoaD family. As to quaternary structure, homohexamer. Requires Mg(2+) as cofactor.

It is found in the cytoplasm. It catalyses the reaction (R)-4'-phosphopantetheine + ATP + H(+) = 3'-dephospho-CoA + diphosphate. The protein operates within cofactor biosynthesis; coenzyme A biosynthesis; CoA from (R)-pantothenate: step 4/5. Reversibly transfers an adenylyl group from ATP to 4'-phosphopantetheine, yielding dephospho-CoA (dPCoA) and pyrophosphate. The polypeptide is Phosphopantetheine adenylyltransferase (Nostoc sp. (strain PCC 7120 / SAG 25.82 / UTEX 2576)).